The chain runs to 83 residues: Cytochrome b559 subunit alpha (83 aa).

Residues 21-35 form a helical membrane-spanning segment; that stretch reads VIHSITIPSLFIAGW. Position 23 (histidine 23) interacts with heme.

It belongs to the PsbE/PsbF family. Heterodimer of an alpha subunit and a beta subunit. PSII is composed of 1 copy each of membrane proteins PsbA, PsbB, PsbC, PsbD, PsbE, PsbF, PsbH, PsbI, PsbJ, PsbK, PsbL, PsbM, PsbT, PsbX, PsbY, PsbZ, Psb30/Ycf12, at least 3 peripheral proteins of the oxygen-evolving complex and a large number of cofactors. It forms dimeric complexes. Heme b serves as cofactor.

It is found in the plastid. Its subcellular location is the chloroplast thylakoid membrane. This b-type cytochrome is tightly associated with the reaction center of photosystem II (PSII). PSII is a light-driven water:plastoquinone oxidoreductase that uses light energy to abstract electrons from H(2)O, generating O(2) and a proton gradient subsequently used for ATP formation. It consists of a core antenna complex that captures photons, and an electron transfer chain that converts photonic excitation into a charge separation. The polypeptide is Cytochrome b559 subunit alpha (Marchantia polymorpha (Common liverwort)).